The chain runs to 159 residues: MGATQSFQSVGDLTPAEKDLIRSTWDQLMTHRTGFVADVFIRIFHNDPTAQRKFPQMAGLSPAELRTSRQMHAHAIRVSALMTTYIDEMDTEVLPELLATLTRTHDKNHVGKKNYDLFGKVLMEAIKAELGVGFTKQVHDAWAKTFAIVQGVLITKHAS.

At G2 the chain carries N-acetylglycine. The Globin domain occupies 12–158 (DLTPAEKDLI…VQGVLITKHA (147 aa)). 2 residues coordinate heme b: H74 and H105.

It belongs to the globin family. As to quaternary structure, homodimer.

In Molpadia arenicola (Sea cucumber), this protein is Globin D, coelomic.